The following is a 286-amino-acid chain: Aminoglycoside N(3)-acetyltransferase III (286 aa).

The protein belongs to the antibiotic N-acetyltransferase family.

The enzyme catalyses a 2-deoxystreptamine antibiotic + acetyl-CoA = an N(3)-acetyl-2-deoxystreptamine antibiotic + CoA + H(+). Functionally, resistance to antibiotics containing the 2-deoxy-streptamine ring including gentamicin, kanamycin, tobramycin, neomycin and apramycin. The polypeptide is Aminoglycoside N(3)-acetyltransferase III (aacC3) (Salmonella sp).